Reading from the N-terminus, the 131-residue chain is Binder of sperm protein homolog 2 (131 aa).

The first 22 residues, 1–22 (MEVMSHLVHWVFLAVYMYELNA), serve as a signal peptide directing secretion. Fibronectin type-II domains follow at residues 35–79 (ISTD…YCTA) and 80–128 (QDPP…QCSP). Cystine bridges form between Cys-40/Cys-64, Cys-54/Cys-77, Cys-85/Cys-111, and Cys-99/Cys-126.

It belongs to the seminal plasma protein family. In terms of tissue distribution, epididymis.

The protein resides in the secreted. Binds sperm in vitro but has no effect on sperm capacitation. Also binds gelatin and heparin, but not chondroitin sulfate B or phospholipid liposomes. This chain is Binder of sperm protein homolog 2, found in Mus musculus (Mouse).